Here is a 567-residue protein sequence, read N- to C-terminus: Periplasmic [NiFe] hydrogenase large subunit (567 aa).

Glu-62 is a Mg(2+) binding site. Residues Cys-81 and Cys-84 each contribute to the Ni(2+) site. Cys-84 contributes to the Fe cation binding site. Leu-498 serves as a coordination point for Mg(2+). Residues Cys-546 and Cys-549 each contribute to the Ni(2+) site. A Fe cation-binding site is contributed by Cys-549. His-552 lines the Mg(2+) pocket. Positions 553 to 567 are excised as a propeptide; it reads VIDGHTNEVHKFRIL.

It belongs to the [NiFe]/[NiFeSe] hydrogenase large subunit family. As to quaternary structure, heterodimer of a large and a small subunit. It depends on Ni(2+) as a cofactor. Requires Fe cation as cofactor.

The protein resides in the periplasm. It catalyses the reaction 2 Fe(III)-[cytochrome c3] + H2 = 2 Fe(II)-[cytochrome c3] + 2 H(+). Catalyzes the reversible oxidoreduction of molecular hydrogen, in conjunction with a specific electron acceptor, cytochrome c3. This is Periplasmic [NiFe] hydrogenase large subunit (hydB) from Nitratidesulfovibrio vulgaris (strain DSM 19637 / Miyazaki F) (Desulfovibrio vulgaris).